The primary structure comprises 483 residues: Regulatory protein ViaA (483 aa).

It belongs to the ViaA family. As to quaternary structure, homodimer. Interacts with RavA.

It localises to the cytoplasm. Its function is as follows. Component of the RavA-ViaA chaperone complex, which may act on the membrane to optimize the function of some of the respiratory chains. ViaA stimulates the ATPase activity of RavA. The sequence is that of Regulatory protein ViaA from Salmonella paratyphi A (strain ATCC 9150 / SARB42).